A 1206-amino-acid chain; its full sequence is Phosphoglucan, water dikinase, chloroplastic (1206 aa).

2 disordered regions span residues 1-20 (MTSLRPLETSLSIGGRPRRG) and 52-71 (RSAASAAERTKEKKRRDSSK). The transit peptide at 1–56 (MTSLRPLETSLSIGGRPRRGLVLPPPGVGAGVLLRRGAMALPGRRGFACRGRSAAS) directs the protein to the chloroplast. Residues 67–168 (RDSSKQPLVH…KFDIVCHWNR (102 aa)) enclose the CBM20 domain. Residue histidine 776 is the Tele-phosphohistidine intermediate of the active site.

The protein belongs to the PEP-utilizing enzyme family. Homodimer. Mg(2+) is required as a cofactor.

Its subcellular location is the plastid. The protein localises to the chloroplast. It catalyses the reaction [(1-&gt;4)-6-phospho-alpha-D-glucosyl](n) + n ATP + n H2O = [(1-&gt;4)-3,6-bisphospho-alpha-D-glucosyl](n) + n AMP + n phosphate + 2n H(+). Mediates the incorporation of phosphate into starch-like phospho-alpha-glucan, mostly at the C-3 position of glucose units. May be required for starch degradation, suggesting that the phosphate content of starch regulates its degradability. This Oryza sativa subsp. japonica (Rice) protein is Phosphoglucan, water dikinase, chloroplastic (GWD3).